The chain runs to 221 residues: Histidine biosynthesis bifunctional protein HisIE (221 aa).

The tract at residues Met-1 to Ile-129 is phosphoribosyl-AMP cyclohydrolase. The segment at Cys-130–Asn-221 is phosphoribosyl-ATP pyrophosphohydrolase.

In the N-terminal section; belongs to the PRA-CH family. This sequence in the C-terminal section; belongs to the PRA-PH family.

It is found in the cytoplasm. It carries out the reaction 1-(5-phospho-beta-D-ribosyl)-ATP + H2O = 1-(5-phospho-beta-D-ribosyl)-5'-AMP + diphosphate + H(+). The enzyme catalyses 1-(5-phospho-beta-D-ribosyl)-5'-AMP + H2O = 1-(5-phospho-beta-D-ribosyl)-5-[(5-phospho-beta-D-ribosylamino)methylideneamino]imidazole-4-carboxamide. Its pathway is amino-acid biosynthesis; L-histidine biosynthesis; L-histidine from 5-phospho-alpha-D-ribose 1-diphosphate: step 2/9. It functions in the pathway amino-acid biosynthesis; L-histidine biosynthesis; L-histidine from 5-phospho-alpha-D-ribose 1-diphosphate: step 3/9. This Prochlorococcus marinus subsp. pastoris (strain CCMP1986 / NIES-2087 / MED4) protein is Histidine biosynthesis bifunctional protein HisIE.